The sequence spans 1293 residues: Receptor-type tyrosine-protein phosphatase C (1293 aa).

Residues 1-25 (MTMGLWLKLLAFGFALLDTEVFVTG) form the signal peptide. The Extracellular portion of the chain corresponds to 26-566 (QTPTPSDELS…RNESTNFNAK (541 aa)). Positions 43–174 (LPQSDPLPAR…STTDISSGAS (132 aa)) are disordered. 3 stretches are compositionally biased toward polar residues: residues 53–72 (TTES…SETT), 88–110 (QPDS…QADN), and 149–169 (LARN…TTDI). An N-linked (GlcNAc...) asparagine glycan is attached at Asn-66. N-linked (GlcNAc...) asparagine glycans are attached at residues Asn-152, Asn-163, Asn-209, Asn-213, Asn-220, Asn-255, Asn-260, Asn-292, Asn-313, Asn-324, Asn-349, Asn-418, Asn-429, Asn-459, and Asn-491. Fibronectin type-III domains are found at residues 376-472 (IPET…TKAD) and 473-568 (RPDK…AKAL). The helical transmembrane segment at 567–588 (ALIIFLVFLIIVTSIALLVVLY) threads the bilayer. The Cytoplasmic segment spans residues 589 to 1293 (KIYDLRKKRS…SASPAPTQSS (705 aa)). Tyrosine-protein phosphatase domains lie at 642–901 (FLAE…LVEY) and 933–1216 (LEAE…IASI). At Tyr-672 the chain carries Phosphotyrosine. Substrate is bound by residues Asp-810, 842–848 (CSAGVGR), and Gln-886. Cys-842 functions as the Phosphocysteine intermediate in the catalytic mechanism. 7 positions are modified to phosphoserine: Ser-964, Ser-983, Ser-986, Ser-990, Ser-993, Ser-994, and Ser-998. Positions 980–1003 (LEMSKESEPESDESSDDDSDSEET) are disordered. Over residues 988-1001 (PESDESSDDDSDSE) the composition is skewed to acidic residues. The active-site Phosphocysteine intermediate is the Cys-1157. Ser-1229 carries the post-translational modification Phosphoserine. A disordered region spans residues 1240 to 1293 (DGGKQDANCVRPDGPLNKAQEDSRGVGTPEPTNSAEEPEHAANGSASPAPTQSS). Thr-1267 is modified (phosphothreonine). A compositionally biased stretch (polar residues) spans 1283–1293 (GSASPAPTQSS). A Phosphoserine modification is found at Ser-1286.

This sequence belongs to the protein-tyrosine phosphatase family. Receptor class 1/6 subfamily. In terms of assembly, interacts with SKAP1. Interacts with DPP4; the interaction is enhanced in an interleukin-12-dependent manner in activated lymphocytes. Binds GANAB and PRKCSH. Interacts with CD53; this interaction stabilizes PTPRC on the membrane and is required for optimal phosphatase activity. Interacts with CLEC10A. Post-translationally, heavily N- and O-glycosylated.

The protein resides in the cell membrane. Its subcellular location is the membrane raft. The protein localises to the synapse. The enzyme catalyses O-phospho-L-tyrosyl-[protein] + H2O = L-tyrosyl-[protein] + phosphate. Its function is as follows. Protein tyrosine-protein phosphatase required for T-cell activation through the antigen receptor. Acts as a positive regulator of T-cell coactivation upon binding to DPP4. The first PTPase domain has enzymatic activity, while the second one seems to affect the substrate specificity of the first one. Upon T-cell activation, recruits and dephosphorylates SKAP1 and FYN. Dephosphorylates LYN, and thereby modulates LYN activity. Interacts with CLEC10A at antigen presenting cell-T cell contact; CLEC10A on immature dendritic cells recognizes Tn antigen-carrying PTPRC/CD45 receptor on effector T cells and modulates T cell activation threshold to limit autoreactivity. The sequence is that of Receptor-type tyrosine-protein phosphatase C from Mus musculus (Mouse).